Consider the following 893-residue polypeptide: TBC domain-containing protein kinase-like protein (893 aa).

The 273-residue stretch at 1-273 (MFPLKDAEMG…PDELMKDQVF (273 aa)) folds into the Protein kinase domain. The region spanning 466–651 (DIPPLMRGLT…HLWDTLLLGN (186 aa)) is the Rab-GAP TBC domain.

It belongs to the protein kinase superfamily. Component of the FERRY complex composed of five subunits, TBCK, PPP1R21, FERRY3, CRYZL1 and GATD1 with a ratio of 1:2:1:2:4, respectively.

The protein resides in the cytoplasm. The protein localises to the cytoskeleton. It localises to the spindle. It is found in the midbody. Its subcellular location is the early endosome. Its function is as follows. Component of the FERRY complex (Five-subunit Endosomal Rab5 and RNA/ribosome intermediary). The FERRY complex directly interacts with mRNAs and RAB5A, and functions as a RAB5A effector involved in the localization and the distribution of specific mRNAs most likely by mediating their endosomal transport. The complex recruits mRNAs and ribosomes to early endosomes through direct mRNA-interaction. Also involved in the modulation of mTOR signaling and expression of mTOR complex components. Involved in the control of actin-cytoskeleton organization. This chain is TBC domain-containing protein kinase-like protein (Tbck), found in Mus musculus (Mouse).